A 65-amino-acid chain; its full sequence is Light-harvesting protein B800/830/1020 beta-2 chain (65 aa).

At 1 to 17 (TDIRTGLTDEECQEIHE) the chain is on the cytoplasmic side. A bacteriochlorophyll contacts are provided by histidine 16 and asparagine 34. A helical transmembrane segment spans residues 18–40 (MNMLGMHAYWSIGLIANALAYAW). Residues 41–65 (RPFHQGRAGNRLEDHAPDYVRSALT) are Periplasmic-facing.

It belongs to the antenna complex beta subunit family. As to quaternary structure, the core complex is formed by different alpha and beta chains, binding bacteriochlorophyll molecules, and arranged most probably in tetrameric structures disposed around the reaction center. The non-pigmented gamma chains may constitute additional components.

The protein localises to the cell inner membrane. Antenna complexes are light-harvesting systems, which transfer the excitation energy to the reaction centers. This Halorhodospira halochloris (Ectothiorhodospira halochloris) protein is Light-harvesting protein B800/830/1020 beta-2 chain.